A 545-amino-acid polypeptide reads, in one-letter code: CTP synthase (545 aa).

An amidoligase domain region spans residues Met1 to Leu266. Ser14 is a CTP binding site. Ser14 contributes to the UTP binding site. ATP-binding positions include Ser15–Ile20 and Asp72. Mg(2+) contacts are provided by Asp72 and Glu140. CTP contacts are provided by residues Asp147 to Glu149, Lys187 to Gln192, and Lys223. UTP-binding positions include Lys187–Gln192 and Lys223. Lys239–Val241 contributes to the ATP binding site. A Glutamine amidotransferase type-1 domain is found at Thr291–Arg542. Gly352 lines the L-glutamine pocket. Cys379 acts as the Nucleophile; for glutamine hydrolysis in catalysis. L-glutamine contacts are provided by residues Leu380–Gln383, Glu403, and Arg470. Active-site residues include His515 and Glu517.

It belongs to the CTP synthase family. As to quaternary structure, homotetramer.

The enzyme catalyses UTP + L-glutamine + ATP + H2O = CTP + L-glutamate + ADP + phosphate + 2 H(+). The catalysed reaction is L-glutamine + H2O = L-glutamate + NH4(+). It carries out the reaction UTP + NH4(+) + ATP = CTP + ADP + phosphate + 2 H(+). It participates in pyrimidine metabolism; CTP biosynthesis via de novo pathway; CTP from UDP: step 2/2. Allosterically activated by GTP, when glutamine is the substrate; GTP has no effect on the reaction when ammonia is the substrate. The allosteric effector GTP functions by stabilizing the protein conformation that binds the tetrahedral intermediate(s) formed during glutamine hydrolysis. Inhibited by the product CTP, via allosteric rather than competitive inhibition. Catalyzes the ATP-dependent amination of UTP to CTP with either L-glutamine or ammonia as the source of nitrogen. Regulates intracellular CTP levels through interactions with the four ribonucleotide triphosphates. In Klebsiella pneumoniae (strain 342), this protein is CTP synthase.